A 120-amino-acid chain; its full sequence is Myohemerythrin (120 aa).

Fe cation-binding residues include His26, His56, Glu60, His75, His79, His108, and Asp113.

It belongs to the hemerythrin family.

In terms of biological role, myohemerythrin is an oxygen-binding protein found in the retractor muscles of certain worms. The oxygen-binding site contains two iron atoms. This chain is Myohemerythrin, found in Riftia pachyptila (Vent tube worm).